The following is a 341-amino-acid chain: GTPase Obg (341 aa).

The Obg domain occupies 1–159 (MKFVDEALIK…RNLRLELRVL (159 aa)). A disordered region spans residues 128 to 150 (TRYKSSVNRSPRQTTPGSPGESR). A compositionally biased stretch (polar residues) spans 129–144 (RYKSSVNRSPRQTTPG). Residues 160–334 (ADVGLLGLPN…LCYALMQLID (175 aa)) form the OBG-type G domain. Residues 166-173 (GLPNAGKS), 191-195 (FTTLH), 213-216 (DIPG), 283-286 (NKID), and 315-317 (SAI) each bind GTP. Positions 173 and 193 each coordinate Mg(2+).

Belongs to the TRAFAC class OBG-HflX-like GTPase superfamily. OBG GTPase family. As to quaternary structure, monomer. Mg(2+) serves as cofactor.

The protein resides in the cytoplasm. In terms of biological role, an essential GTPase which binds GTP, GDP and possibly (p)ppGpp with moderate affinity, with high nucleotide exchange rates and a fairly low GTP hydrolysis rate. Plays a role in control of the cell cycle, stress response, ribosome biogenesis and in those bacteria that undergo differentiation, in morphogenesis control. The sequence is that of GTPase Obg from Legionella pneumophila (strain Lens).